A 98-amino-acid chain; its full sequence is Integration host factor subunit beta (98 aa).

This sequence belongs to the bacterial histone-like protein family. As to quaternary structure, heterodimer of an alpha and a beta chain.

This protein is one of the two subunits of integration host factor, a specific DNA-binding protein that functions in genetic recombination as well as in transcriptional and translational control. This Pseudomonas entomophila (strain L48) protein is Integration host factor subunit beta.